A 477-amino-acid polypeptide reads, in one-letter code: MFRRGDNSNFNVQNSFFLPLEYEYTVKDNVPSKKKSSIGFFPLDDSLFTSKNNSGHHKSEQLHRGNAETIRSQFGTDAVPIRIDEKEGKWDRIQDDNSSNLNYQINNSNDPASSGKYTQSIDCNHIAESKFSKKNGNIDSLRSNSATFMLNTADEDVIEFSFDDNVPYAELLSGATLEKCSLTLNEINKKLFNTLYDFRVSKDNPEENLVELILPNCVVLLNFFEDIELLADSSDEAFEKSTFINTIEFIVHDIWVETLIKNINLLQMFDADLKCYNDKYIICKLKGQYPSTNIVDIMCRLKHFSNSILETFKFGIELKEQDQCHNRNTIINYVLFSRVFSTIVLEIQKCFILIVKFMYSVNFLEKFSDEVFLSFIEILIKIVFEHQIPQLFLGIDEIIQLWLKNNEGKRQQLLSAWCNGTVQDMKQSQQRESSNAESESITSSTEEDEEGLQFNKWDVIEPFIDNIKALNQSKSHM.

A disordered region spans residues 428-452; that stretch reads SQQRESSNAESESITSSTEEDEEGL. The span at 432–444 shows a compositional bias: low complexity; that stretch reads ESSNAESESITSS.

Its subcellular location is the cytoplasm. Functionally, required for spore wall assembly and ascus formation. This Saccharomyces cerevisiae (strain ATCC 204508 / S288c) (Baker's yeast) protein is Sporulation-specific protein 77 (SPO77).